A 64-amino-acid chain; its full sequence is Large ribosomal subunit protein bL33 (64 aa).

It belongs to the bacterial ribosomal protein bL33 family.

The sequence is that of Large ribosomal subunit protein bL33 from Thermosynechococcus vestitus (strain NIES-2133 / IAM M-273 / BP-1).